Here is a 38-residue protein sequence, read N- to C-terminus: Large ribosomal subunit protein bL36 (38 aa).

It belongs to the bacterial ribosomal protein bL36 family.

The chain is Large ribosomal subunit protein bL36 from Wigglesworthia glossinidia brevipalpis.